A 600-amino-acid polypeptide reads, in one-letter code: Sodium- and chloride-dependent betaine transporter (600 aa).

Positions 1–31 (MGTSEHVPLPTDEAKAKELEQSQHSEEPDRG) are disordered. At 1–38 (MGTSEHVPLPTDEAKAKELEQSQHSEEPDRGQWTGKFD) the chain is on the cytoplasmic side. Over residues 12–30 (DEAKAKELEQSQHSEEPDR) the composition is skewed to basic and acidic residues. 3 helical membrane-spanning segments follow: residues 39–59 (FLMS…FPYL), 68–88 (FLVV…LMEV), and 116–136 (VVIA…AMFY). Topologically, residues 137 to 207 (MISSIAWVFP…DTGDISEFGG (71 aa)) are extracellular. Residue N165 is glycosylated (N-linked (GlcNAc...) asparagine). 2 consecutive transmembrane segments (helical) span residues 208–228 (IQWE…FALW) and 237–257 (FVYF…IRGL). An N-linked (GlcNAc...) asparagine glycan is attached at N273. 7 consecutive transmembrane segments (helical) span residues 286–306 (AGTQ…ALGS), 321–341 (MCFI…SILG), 378–398 (VFAV…QVCM), 420–440 (SLGI…THSG), 454–474 (GYAL…GFGA), 499–519 (FCAP…YHPV), and 536–556 (WFLS…YLFF). The Cytoplasmic segment spans residues 557 to 600 (TNKHLTLKERVRKGLNLDGSFESPAKKNLVNNAEELKFIESSSQ).

This sequence belongs to the sodium:neurotransmitter symporter (SNF) family. Highly expressed in the head, the excretory canal, tail hypodermal cells, epidermis and vulval epithelial cells. Expressed in the excretory canal-associated neuron and in some non-amphidial sensory neurons in the head (at protein level).

It localises to the cell membrane. Betaine transporter dependent on Na(+) and Cl(-) ions that functions primarily in the epidermis to clear betaine from the extracellular space. Elicits current in response to betaine but not in response to GABA, L-carnitine, sarcosine, glycine or dimethylglycine. The sequence is that of Sodium- and chloride-dependent betaine transporter from Caenorhabditis elegans.